Consider the following 512-residue polypeptide: Apolipoprotein N-acyltransferase (512 aa).

The next 6 helical transmembrane spans lie at 5-25 (LDKY…FAAA), 56-76 (FAVS…FYWI), 92-112 (VPLT…CFWL), 118-138 (LPRG…TEFA), 168-188 (LGGI…LVLA), and 195-215 (SGKR…GYTA). The CN hydrolase domain maps to 233-477 (LQGNIDQTLK…ETVLEGHIKG (245 aa)). The active-site Proton acceptor is Glu-271. Residue Lys-337 is part of the active site. The Nucleophile role is filled by Cys-389. Residues 487-507 (TGSSWWLMGILALAALILFIF) form a helical membrane-spanning segment.

Belongs to the CN hydrolase family. Apolipoprotein N-acyltransferase subfamily.

The protein resides in the cell inner membrane. It carries out the reaction N-terminal S-1,2-diacyl-sn-glyceryl-L-cysteinyl-[lipoprotein] + a glycerophospholipid = N-acyl-S-1,2-diacyl-sn-glyceryl-L-cysteinyl-[lipoprotein] + a 2-acyl-sn-glycero-3-phospholipid + H(+). The protein operates within protein modification; lipoprotein biosynthesis (N-acyl transfer). Functionally, catalyzes the phospholipid dependent N-acylation of the N-terminal cysteine of apolipoprotein, the last step in lipoprotein maturation. The sequence is that of Apolipoprotein N-acyltransferase from Neisseria meningitidis serogroup B (strain ATCC BAA-335 / MC58).